The primary structure comprises 102 residues: Large ribosomal subunit protein bL21 (102 aa).

A compositionally biased stretch (basic residues) spans 79–91 (RKDSKRKKGHRQP). The interval 79 to 102 (RKDSKRKKGHRQPYTKLTIDKINA) is disordered.

Belongs to the bacterial ribosomal protein bL21 family. As to quaternary structure, part of the 50S ribosomal subunit. Contacts protein L20.

This protein binds to 23S rRNA in the presence of protein L20. In Staphylococcus saprophyticus subsp. saprophyticus (strain ATCC 15305 / DSM 20229 / NCIMB 8711 / NCTC 7292 / S-41), this protein is Large ribosomal subunit protein bL21.